Here is a 63-residue protein sequence, read N- to C-terminus: Large ribosomal subunit protein uL29 (63 aa).

The protein belongs to the universal ribosomal protein uL29 family.

This Pelagibacter ubique (strain HTCC1062) protein is Large ribosomal subunit protein uL29.